We begin with the raw amino-acid sequence, 181 residues long: Deoxyuridine 5'-triphosphate nucleotidohydrolase (181 aa).

Residues 96 to 98 (RSG), Asn-109, 113 to 115 (TVD), and Lys-123 contribute to the substrate site.

This sequence belongs to the dUTPase family. It depends on Mg(2+) as a cofactor.

The catalysed reaction is dUTP + H2O = dUMP + diphosphate + H(+). Its pathway is pyrimidine metabolism; dUMP biosynthesis; dUMP from dCTP (dUTP route): step 2/2. Its function is as follows. This enzyme is involved in nucleotide metabolism: it produces dUMP, the immediate precursor of thymidine nucleotides and it decreases the intracellular concentration of dUTP so that uracil cannot be incorporated into DNA. The polypeptide is Deoxyuridine 5'-triphosphate nucleotidohydrolase (Corynebacterium efficiens (strain DSM 44549 / YS-314 / AJ 12310 / JCM 11189 / NBRC 100395)).